The sequence spans 410 residues: Kelch domain-containing protein 10 (410 aa).

The tract at residues 1-40 (MSAAQGWDRNRRRGGGAAGGASGVSGAGAAGGGRGTGQLN) is disordered. Arg-13 is modified (omega-N-methylarginine). Residues 15 to 36 (GGAAGGASGVSGAGAAGGGRGT) are compositionally biased toward gly residues. 6 Kelch repeats span residues 87 to 154 (GPDN…DVHV), 155 to 198 (CNVK…GYIY), 199 to 260 (STDL…IHAY), 261 to 319 (NLET…LQTF), 320 to 364 (QWVK…GSLF), and 365 to 403 (KIWLVVPSLLELAWEKLLAAFPNLANLSRTQLLHLGLTQ). The interval 369-410 (VVPSLLELAWEKLLAAFPNLANLSRTQLLHLGLTQELIERLK) is interaction with CUL2.

The protein belongs to the KLHDC10 family. As to quaternary structure, component of a CRL2 E3 ubiquitin-protein ligase complex, also named ECS (Elongin BC-CUL2/5-SOCS-box protein) complex, composed of CUL2, Elongin BC (ELOB and ELOC), RBX1 and substrate-specific adapter KLHDC10. Interacts (via the 6 Kelch repeats) with PPP5C.

It is found in the nucleus. It localises to the cytoplasm. It participates in protein modification; protein ubiquitination. Substrate-recognition component of a Cul2-RING (CRL2) E3 ubiquitin-protein ligase complex of the DesCEND (destruction via C-end degrons) pathway, which recognizes a C-degron located at the extreme C-terminus of target proteins, leading to their ubiquitination and degradation. The C-degron recognized by the DesCEND pathway is usually a motif of less than ten residues and can be present in full-length proteins, truncated proteins or proteolytically cleaved forms. The CRL2(KLHDC10) complex specifically recognizes proteins with a proline-glycine (Pro-Gly) or an alanine tail (CAT tail) at the C-terminus, leading to their ubiquitination and degradation. The CRL2(KLHDC10) complex is involved in the ribosome-associated quality control (RQC) pathway, which mediates the extraction of incompletely synthesized nascent chains from stalled ribosomes: CRL2(KLHDC10) acts downstream of NEMF and recognizes CAT tails associated with stalled nascent chains, leading to their ubiquitination and degradation. Participates in the oxidative stress-induced cell death through MAP3K5 activation. Inhibits PPP5C phosphatase activity on MAP3K5. Acts as a regulator of necroptosis. The chain is Kelch domain-containing protein 10 from Rattus norvegicus (Rat).